The following is a 196-amino-acid chain: Imidazoleglycerol-phosphate dehydratase (196 aa).

This sequence belongs to the imidazoleglycerol-phosphate dehydratase family.

It is found in the cytoplasm. The enzyme catalyses D-erythro-1-(imidazol-4-yl)glycerol 3-phosphate = 3-(imidazol-4-yl)-2-oxopropyl phosphate + H2O. It functions in the pathway amino-acid biosynthesis; L-histidine biosynthesis; L-histidine from 5-phospho-alpha-D-ribose 1-diphosphate: step 6/9. This is Imidazoleglycerol-phosphate dehydratase from Clostridium botulinum (strain Okra / Type B1).